We begin with the raw amino-acid sequence, 385 residues long: Probable protein phosphatase 2C 38 (385 aa).

A PPM-type phosphatase domain is found at 46–357 (VAGEFSMSVI…DDITVIVVFL (312 aa)). A Phosphoserine modification is found at Ser77. Asp88, Gly89, Asp289, and Asp348 together coordinate Mn(2+).

It belongs to the PP2C family. Interacts with BIK1. Mg(2+) serves as cofactor. It depends on Mn(2+) as a cofactor. Post-translationally, phosphorylation at Ser-77 induces dissociation of PP2C38 from BIK1.

It is found in the cell membrane. The enzyme catalyses O-phospho-L-seryl-[protein] + H2O = L-seryl-[protein] + phosphate. It carries out the reaction O-phospho-L-threonyl-[protein] + H2O = L-threonyl-[protein] + phosphate. May dephosphorylate and repress plasma membrane H(+)-ATPases (PM H(+)-ATPases, e.g. AHA1 and AHA2), thus influencing negatively plant growth and fitness. Involved in pathogen-associated molecular pattern (PAMP)-triggered immunity (PTI) signaling. Negatively regulates immune responses by controlling the phosphorylation and activation status of BIK1, a central rate-limiting kinase in PTI signaling. Impairs the phosphorylation of the NADPH oxidase RBOHD by BIK1. The protein is Probable protein phosphatase 2C 38 of Arabidopsis thaliana (Mouse-ear cress).